Consider the following 100-residue polypeptide: Virion membrane protein OPG135 (100 aa).

Residues Met-1–Gly-22 form the signal peptide. Over Ala-23–Trp-45 the chain is Intravirion. Residues Phe-46–Leu-66 traverse the membrane as a helical segment. Over Tyr-67–Ser-83 the chain is Virion surface. Positions Lys-75–Lys-100 are disordered. N-linked (GlcNAc...) asparagine; by host glycans are attached at residues Asn-79, Asn-89, and Asn-96.

It belongs to the chordopoxvirinae A9 family.

It localises to the virion membrane. It is found in the host cytoplasm. In terms of biological role, envelope protein. Required for an early step in virion morphogenesis. The chain is Virion membrane protein OPG135 (OPG135) from Monkeypox virus.